The following is a 401-amino-acid chain: Anhydro-N-acetylmuramic acid kinase (401 aa).

Residue 25–32 coordinates ATP; the sequence is GTSLDGLD.

It belongs to the anhydro-N-acetylmuramic acid kinase family.

It carries out the reaction 1,6-anhydro-N-acetyl-beta-muramate + ATP + H2O = N-acetyl-D-muramate 6-phosphate + ADP + H(+). It functions in the pathway amino-sugar metabolism; 1,6-anhydro-N-acetylmuramate degradation. Its pathway is cell wall biogenesis; peptidoglycan recycling. Functionally, catalyzes the specific phosphorylation of 1,6-anhydro-N-acetylmuramic acid (anhMurNAc) with the simultaneous cleavage of the 1,6-anhydro ring, generating MurNAc-6-P. Is required for the utilization of anhMurNAc either imported from the medium or derived from its own cell wall murein, and thus plays a role in cell wall recycling. The sequence is that of Anhydro-N-acetylmuramic acid kinase from Pseudoalteromonas atlantica (strain T6c / ATCC BAA-1087).